The primary structure comprises 1000 residues: UPF0182 protein SCO5204 (1000 aa).

7 helical membrane-spanning segments follow: residues 26-48 (LLLTLGVLAVLAMAFTMFAGFWT), 70-92 (IGLFFVFGLLMALAVGFNIWLAH), 121-143 (WLLLGITALVGLIAGASASGQWR), 177-199 (FLLGFGFAAVIISVIAAALTHYL), 220-237 (LSVLLGVFVALKAVAYWL), 267-289 (LPAKTILFCIAVICALLFFATLW), and 296-318 (PVIGFGLMVLSAILIGGLYPALV). Disordered regions lie at residues 884 to 908 (AETEQPPDEGDDTTEPPPTSTNPTV) and 943 to 1000 (EALQ…ADTG). Positions 888–897 (QPPDEGDDTT) are enriched in acidic residues. Composition is skewed to basic and acidic residues over residues 943–953 (EALQRAEDAQA) and 963–984 (NGDDKNAGDKNSGDKAGSDKAG).

It belongs to the UPF0182 family.

Its subcellular location is the cell membrane. The protein is UPF0182 protein SCO5204 of Streptomyces coelicolor (strain ATCC BAA-471 / A3(2) / M145).